We begin with the raw amino-acid sequence, 608 residues long: NADH-quinone oxidoreductase subunit C/D (608 aa).

The segment at 1-199 (MSAASSLAPQ…EPFHLSTEKE (199 aa)) is NADH dehydrogenase I subunit C. Positions 223–608 (DFMFLNLGPN…IDFVMADVDR (386 aa)) are NADH dehydrogenase I subunit D.

The protein in the N-terminal section; belongs to the complex I 30 kDa subunit family. It in the C-terminal section; belongs to the complex I 49 kDa subunit family. NDH-1 is composed of 13 different subunits. Subunits NuoB, CD, E, F, and G constitute the peripheral sector of the complex.

It is found in the cell inner membrane. The catalysed reaction is a quinone + NADH + 5 H(+)(in) = a quinol + NAD(+) + 4 H(+)(out). Its function is as follows. NDH-1 shuttles electrons from NADH, via FMN and iron-sulfur (Fe-S) centers, to quinones in the respiratory chain. The immediate electron acceptor for the enzyme in this species is believed to be ubiquinone. Couples the redox reaction to proton translocation (for every two electrons transferred, four hydrogen ions are translocated across the cytoplasmic membrane), and thus conserves the redox energy in a proton gradient. The sequence is that of NADH-quinone oxidoreductase subunit C/D from Nitrosospira multiformis (strain ATCC 25196 / NCIMB 11849 / C 71).